Consider the following 100-residue polypeptide: uncharacterized protein (100 aa).

Helical transmembrane passes span 1–21 and 54–74; these read MLVLVFLIGLSACFYVYYKVK and MILFHSVLTLVIGGIFIVIGA.

It is found in the cell membrane. This is an uncharacterized protein from Bacillus subtilis (strain 168).